We begin with the raw amino-acid sequence, 372 residues long: Glutamate 5-kinase (372 aa).

An ATP-binding site is contributed by Lys14. The substrate site is built by Ser54, Asp141, and Asn153. 173–174 (TD) contributes to the ATP binding site. The PUA domain maps to 280-358 (RGRVVIDAGA…SEIESVLGHL (79 aa)).

Belongs to the glutamate 5-kinase family.

It is found in the cytoplasm. It catalyses the reaction L-glutamate + ATP = L-glutamyl 5-phosphate + ADP. It participates in amino-acid biosynthesis; L-proline biosynthesis; L-glutamate 5-semialdehyde from L-glutamate: step 1/2. Functionally, catalyzes the transfer of a phosphate group to glutamate to form L-glutamate 5-phosphate. The polypeptide is Glutamate 5-kinase (Cupriavidus pinatubonensis (strain JMP 134 / LMG 1197) (Cupriavidus necator (strain JMP 134))).